A 470-amino-acid polypeptide reads, in one-letter code: Arginine ADP-riboxanase OspC1 (470 aa).

His138, Gln139, Ser140, Leu144, Ile157, Asn167, Phe183, His201, Phe206, Asp226, and Glu320 together coordinate NAD(+). Glu320 is an active-site residue. 3 ANK repeats span residues Ile363 to Gln392, His399 to Thr431, and Ser438 to Asn467.

It belongs to the OspC family. As to quaternary structure, interacts with host calmodulin (CALM1, CALM2 and/or CALM3); specifically interacts with the apo form of calmodulin, preventing calcium-binding.

The protein localises to the secreted. The protein resides in the host nucleus. The catalysed reaction is L-arginyl-[protein] + NAD(+) = ADP-riboxanated L-argininyl-[protein] + nicotinamide + NH4(+) + H(+). ADP-riboxanase effector that mediates arginine ADP-riboxanation of host caspases. ADP-riboxanation of host apoptotic caspases (CASP3, CASP8 and CASP9) prevents their activation, thereby inhibiting host cell extrinsic and intrinsic apoptosis. Does not catalyze ADP-riboxanation of host CASP4/CASP11. Independently of its ADP-riboxanase activity, acts as an inhibitor of calcium signaling by inhibiting host calmodulin, preventing activation of the JAK-STAT signaling pathway in response to interferon-beta. Mechanistically, acts by binding to the apo form of calmodulin, preventing calcium-binding and ability to activate host CaMK2 (CAMKII), which is required to stimulate the JAK-STAT signaling pathway in response to interferon-beta. This is Arginine ADP-riboxanase OspC1 from Shigella flexneri.